The primary structure comprises 224 residues: LOB domain-containing protein 15 (224 aa).

The 102-residue stretch at 44-145 (TPCAACKLLR…AELTAVRSEI (102 aa)) folds into the LOB domain. Residues 171–224 (SGGVSVIAPPPQRPTTPPQPTTAHPPSPSSCVFSQPTTRDLEYGNIESENNYFG) are disordered. Residues 178 to 198 (APPPQRPTTPPQPTTAHPPSP) show a composition bias toward pro residues.

The protein belongs to the LOB domain-containing protein family. Expressed in young shoots, roots, stems, leaves and flowers.

This chain is LOB domain-containing protein 15 (LBD15), found in Arabidopsis thaliana (Mouse-ear cress).